The primary structure comprises 350 residues: 4-hydroxy-2-oxovalerate aldolase 2 (350 aa).

One can recognise a Pyruvate carboxyltransferase domain in the interval 8–260 (ITVHDMTLRD…ETGVDVFKIQ (253 aa)). Position 16–17 (16–17 (RD)) interacts with substrate. D17 contacts Mn(2+). H20 (proton acceptor) is an active-site residue. Positions 170 and 199 each coordinate substrate. Mn(2+) is bound by residues H199 and H201. Y290 contributes to the substrate binding site.

Belongs to the 4-hydroxy-2-oxovalerate aldolase family.

The catalysed reaction is (S)-4-hydroxy-2-oxopentanoate = acetaldehyde + pyruvate. This is 4-hydroxy-2-oxovalerate aldolase 2 (tesG) from Comamonas testosteroni (Pseudomonas testosteroni).